The chain runs to 392 residues: Phosphopentomutase (392 aa).

The Mn(2+) site is built by aspartate 13, aspartate 286, histidine 291, aspartate 327, histidine 328, and histidine 339.

The protein belongs to the phosphopentomutase family. The cofactor is Mn(2+).

It localises to the cytoplasm. It carries out the reaction 2-deoxy-alpha-D-ribose 1-phosphate = 2-deoxy-D-ribose 5-phosphate. The catalysed reaction is alpha-D-ribose 1-phosphate = D-ribose 5-phosphate. The protein operates within carbohydrate degradation; 2-deoxy-D-ribose 1-phosphate degradation; D-glyceraldehyde 3-phosphate and acetaldehyde from 2-deoxy-alpha-D-ribose 1-phosphate: step 1/2. Isomerase that catalyzes the conversion of deoxy-ribose 1-phosphate (dRib-1-P) and ribose 1-phosphate (Rib-1-P) to deoxy-ribose 5-phosphate (dRib-5-P) and ribose 5-phosphate (Rib-5-P), respectively. This chain is Phosphopentomutase, found in Oceanobacillus iheyensis (strain DSM 14371 / CIP 107618 / JCM 11309 / KCTC 3954 / HTE831).